Reading from the N-terminus, the 234-residue chain is Proteasome subunit alpha type-2 (234 aa).

N-acetylalanine is present on alanine 2. Residue tyrosine 6 is modified to Phosphotyrosine. Phosphoserine occurs at positions 7, 14, and 16. Phosphotyrosine is present on tyrosine 24. Residue lysine 70 is modified to N6-acetyllysine. Phosphotyrosine occurs at positions 76 and 121. At lysine 171 the chain carries N6-acetyllysine.

It belongs to the peptidase T1A family. In terms of assembly, the 26S proteasome consists of a 20S proteasome core and two 19S regulatory subunits. The 20S proteasome core is a barrel-shaped complex made of 28 subunits that are arranged in four stacked rings. The two outer rings are each formed by seven alpha subunits, and the two inner rings are formed by seven beta subunits. The proteolytic activity is exerted by three beta-subunits PSMB5, PSMB6 and PSMB7. Post-translationally, phosphorylated on tyrosine residues; which may be important for nuclear import.

It localises to the cytoplasm. It is found in the nucleus. Its function is as follows. Component of the 20S core proteasome complex involved in the proteolytic degradation of most intracellular proteins. This complex plays numerous essential roles within the cell by associating with different regulatory particles. Associated with two 19S regulatory particles, forms the 26S proteasome and thus participates in the ATP-dependent degradation of ubiquitinated proteins. The 26S proteasome plays a key role in the maintenance of protein homeostasis by removing misfolded or damaged proteins that could impair cellular functions, and by removing proteins whose functions are no longer required. Associated with the PA200 or PA28, the 20S proteasome mediates ubiquitin-independent protein degradation. This type of proteolysis is required in several pathways including spermatogenesis (20S-PA200 complex) or generation of a subset of MHC class I-presented antigenic peptides (20S-PA28 complex). This Bos taurus (Bovine) protein is Proteasome subunit alpha type-2 (PSMA2).